Consider the following 299-residue polypeptide: Glycine--tRNA ligase alpha subunit (299 aa).

This sequence belongs to the class-II aminoacyl-tRNA synthetase family. In terms of assembly, tetramer of two alpha and two beta subunits.

The protein resides in the cytoplasm. It carries out the reaction tRNA(Gly) + glycine + ATP = glycyl-tRNA(Gly) + AMP + diphosphate. This chain is Glycine--tRNA ligase alpha subunit, found in Dichelobacter nodosus (strain VCS1703A).